Reading from the N-terminus, the 203-residue chain is Large ribosomal subunit protein bL25 (203 aa).

The protein belongs to the bacterial ribosomal protein bL25 family. CTC subfamily. As to quaternary structure, part of the 50S ribosomal subunit; part of the 5S rRNA/L5/L18/L25 subcomplex. Contacts the 5S rRNA. Binds to the 5S rRNA independently of L5 and L18.

In terms of biological role, this is one of the proteins that binds to the 5S RNA in the ribosome where it forms part of the central protuberance. In Paraburkholderia phymatum (strain DSM 17167 / CIP 108236 / LMG 21445 / STM815) (Burkholderia phymatum), this protein is Large ribosomal subunit protein bL25.